Reading from the N-terminus, the 311-residue chain is MAQFQIECIESRTDGARGQYGSFVIEPLNQGQGITLGNALRRSILSDLEGTAIVAVRIAGVNHEFSTIPGVREDVLEILLNLKEVVFKSYNKESQIGRIRVQGPAIVTAGLFELSSDIEVVDPRQYIATICNNTIFEMEFKIEKNCGYRLAEKAVDELSVDFLQVDSVFMPVNKVNYKVEEVRIGSNSIKDRLIIQIWTNGSISPQEAISQGATVLTNLFCSLRNLDFKSADNYRSKEDKKISQVLIEELQLSVRAYNCLKRAQIHSIADLLDYSQEELLEIKNFGQKSAEEVIYALQKKLGISLPKEKSD.

The interval Met-1–Asp-227 is alpha N-terminal domain (alpha-NTD). Residues Asp-239–Asp-311 are alpha C-terminal domain (alpha-CTD).

This sequence belongs to the RNA polymerase alpha chain family. As to quaternary structure, in plastids the minimal PEP RNA polymerase catalytic core is composed of four subunits: alpha, beta, beta', and beta''. When a (nuclear-encoded) sigma factor is associated with the core the holoenzyme is formed, which can initiate transcription.

It localises to the plastid. The protein localises to the chloroplast. The catalysed reaction is RNA(n) + a ribonucleoside 5'-triphosphate = RNA(n+1) + diphosphate. Functionally, DNA-dependent RNA polymerase catalyzes the transcription of DNA into RNA using the four ribonucleoside triphosphates as substrates. This is DNA-directed RNA polymerase subunit alpha from Pyropia yezoensis (Susabi-nori).